The primary structure comprises 178 residues: UPF0215 protein STK_03040 (178 aa).

The protein belongs to the UPF0215 family.

The polypeptide is UPF0215 protein STK_03040 (Sulfurisphaera tokodaii (strain DSM 16993 / JCM 10545 / NBRC 100140 / 7) (Sulfolobus tokodaii)).